Consider the following 146-residue polypeptide: MGDFDMVLKFWGPVEADYSAHGGMVLTRLFTENPETQQLFPKFVGIAQSELAGNAAVSAHGATVLKKLGELLKAKGNHAAILQPLANSHATKHKIPIKNFKLIAEVIGKVMAEKAGLDTAGQQALRNIMATIIADIDATYKELGFS.

Residues 2–141 enclose the Globin domain; sequence GDFDMVLKFW…IIADIDATYK (140 aa). H60 contacts nitrite. An O2-binding site is contributed by H60. H89 contacts heme b.

It belongs to the globin family. As to quaternary structure, monomeric.

It localises to the cytoplasm. The protein resides in the sarcoplasm. It carries out the reaction Fe(III)-heme b-[protein] + nitric oxide + H2O = Fe(II)-heme b-[protein] + nitrite + 2 H(+). The enzyme catalyses H2O2 + AH2 = A + 2 H2O. Monomeric heme protein which primary function is to store oxygen and facilitate its diffusion within muscle tissues. Reversibly binds oxygen through a pentacoordinated heme iron and enables its timely and efficient release as needed during periods of heightened demand. Depending on the oxidative conditions of tissues and cells, and in addition to its ability to bind oxygen, it also has a nitrite reductase activity whereby it regulates the production of bioactive nitric oxide. Under stress conditions, like hypoxia and anoxia, it also protects cells against reactive oxygen species thanks to its pseudoperoxidase activity. The polypeptide is Myoglobin (mb) (Tetraodon nigroviridis (Spotted green pufferfish)).